A 95-amino-acid chain; its full sequence is Acylphosphatase (95 aa).

The Acylphosphatase-like domain maps to 9–95 (RLTAWVHGRV…KGGLTGFVER (87 aa)). Catalysis depends on residues arginine 24 and asparagine 42.

It belongs to the acylphosphatase family.

It catalyses the reaction an acyl phosphate + H2O = a carboxylate + phosphate + H(+). The chain is Acylphosphatase (acyP) from Saccharopolyspora erythraea (strain ATCC 11635 / DSM 40517 / JCM 4748 / NBRC 13426 / NCIMB 8594 / NRRL 2338).